Consider the following 350-residue polypeptide: MGITKLAHLIHFDAPASMRSKEIGDYSGKIIALDTSIVVNQFRSALPGHLKLSPLAGLFYRTLAFLEHDIKPVFVLDGKPPHQKRAVLEKRAQSTGWSSSQSPNTGSAFNQECLRLLHLMGVPCIKAPGEAEALCAHLAKIGTVNAVASEDMDTLAFGGTVLLRQLNAKRDSEITEYSLPKLLEALQLKYEEFVDLCILLGCDYCDKIGGLGPSRALKLIKEHHTIEGVMEHVNRKTHPIPLNWQYKDARKLFFETPKIDDPVLAWSEPDEEGLVQFLCKEKPLKEERVRGRMKKFREMLLKRRKQREVNMQMGQTRQSRLEDFFPATRKRRAESAAVKESSGRKQFKIK.

The interval 1 to 95 (MGITKLAHLI…AVLEKRAQST (95 aa)) is N-domain. Residue Asp-34 participates in Mg(2+) binding. Arg-61 lines the DNA pocket. Residues Asp-77, Glu-130, Glu-132, Asp-151, and Asp-153 each coordinate Mg(2+). The segment at 110-223 (NQECLRLLHL…SRALKLIKEH (114 aa)) is I-domain. Residue Glu-130 participates in DNA binding. Gly-201 and Asp-203 together coordinate DNA. Asp-203 is a Mg(2+) binding site. Positions 317–325 (RQSRLEDFF) are interaction with PCNA.

It belongs to the XPG/RAD2 endonuclease family. FEN1 subfamily. As to quaternary structure, interacts with PCNA. Three molecules of fen1 bind to one PCNA trimer with each molecule binding to one PCNA monomer. PCNA stimulates the nuclease activity without altering cleavage specificity. Mg(2+) serves as cofactor. In terms of processing, phosphorylated. Phosphorylation upon DNA damage induces relocalization to the nuclear plasma.

The protein localises to the nucleus. It is found in the nucleolus. It localises to the nucleoplasm. The protein resides in the mitochondrion. Its function is as follows. Structure-specific nuclease with 5'-flap endonuclease and 5'-3' exonuclease activities involved in DNA replication and repair. During DNA replication, cleaves the 5'-overhanging flap structure that is generated by displacement synthesis when DNA polymerase encounters the 5'-end of a downstream Okazaki fragment. It enters the flap from the 5'-end and then tracks to cleave the flap base, leaving a nick for ligation. Also involved in the long patch base excision repair (LP-BER) pathway, by cleaving within the apurinic/apyrimidinic (AP) site-terminated flap. Acts as a genome stabilization factor that prevents flaps from equilibrating into structures that lead to duplications and deletions. Also possesses 5'-3' exonuclease activity on nicked or gapped double-stranded DNA, and exhibits RNase H activity. Also involved in replication and repair of rDNA and in repairing mitochondrial DNA. This Danio rerio (Zebrafish) protein is Probable flap endonuclease 1 homolog.